Reading from the N-terminus, the 1322-residue chain is Mediator of RNA polymerase II transcription subunit 12 (1322 aa).

Residues 1 to 21 (MSPSKYLLTPPEELHPLTDSN) are disordered.

The protein belongs to the Mediator complex subunit 12 family. In terms of assembly, component of the SRB8-11 complex, which itself associates with the Mediator complex.

It localises to the nucleus. Its function is as follows. Component of the SRB8-11 complex. The SRB8-11 complex is a regulatory module of the Mediator complex which is itself involved in regulation of basal and activated RNA polymerase II-dependent transcription. The SRB8-11 complex may be involved in the transcriptional repression of a subset of genes regulated by Mediator. It may inhibit the association of the Mediator complex with RNA polymerase II to form the holoenzyme complex. The chain is Mediator of RNA polymerase II transcription subunit 12 (SRB8) from Kluyveromyces lactis (strain ATCC 8585 / CBS 2359 / DSM 70799 / NBRC 1267 / NRRL Y-1140 / WM37) (Yeast).